The primary structure comprises 64 residues: Prokaryotic ubiquitin-like protein Pup (64 aa).

The interval 1 to 37 (MAQEQTKRGGGGGDDEDVTGTTAAGQERREKLAQDTD) is disordered. The interval 21–58 (TTAAGQERREKLAQDTDDLLDEIDDVLEENAEDFVRAY) is ARC ATPase binding. Residues 25-52 (GQERREKLAQDTDDLLDEIDDVLEENAE) are a coiled coil. The residue at position 64 (Q64) is a Deamidated glutamine. Q64 is covalently cross-linked (Isoglutamyl lysine isopeptide (Gln-Lys) (interchain with K-? in acceptor proteins)).

This sequence belongs to the prokaryotic ubiquitin-like protein family. As to quaternary structure, strongly interacts with the proteasome-associated ATPase ARC through a hydrophobic interface; the interacting region of Pup lies in its C-terminal half. There is one Pup binding site per ARC hexamer ring. Post-translationally, is modified by deamidation of its C-terminal glutamine to glutamate by the deamidase Dop, a prerequisite to the subsequent pupylation process.

It functions in the pathway protein degradation; proteasomal Pup-dependent pathway. Protein modifier that is covalently attached to lysine residues of substrate proteins, thereby targeting them for proteasomal degradation. The tagging system is termed pupylation. In Mycobacterium marinum (strain ATCC BAA-535 / M), this protein is Prokaryotic ubiquitin-like protein Pup.